A 155-amino-acid polypeptide reads, in one-letter code: RING finger protein 122 (155 aa).

A helical transmembrane segment spans residues valine 40 to isoleucine 60. The RING-type; atypical zinc finger occupies cysteine 93–asparagine 134.

Its subcellular location is the golgi apparatus. It localises to the endoplasmic reticulum. The protein resides in the membrane. May induce necrosis and apoptosis. May play a role in cell viability. This chain is RING finger protein 122 (Rnf122), found in Mus musculus (Mouse).